The chain runs to 259 residues: 3'-5' ssDNA/RNA exonuclease TatD (259 aa).

Residues E92, H128, and H153 each contribute to the a divalent metal cation site.

The protein belongs to the metallo-dependent hydrolases superfamily. TatD-type hydrolase family. TatD subfamily. In terms of assembly, monomer. Mg(2+) serves as cofactor.

Its subcellular location is the cytoplasm. Its function is as follows. 3'-5' exonuclease that prefers single-stranded DNA and RNA. May play a role in the H(2)O(2)-induced DNA damage repair. The chain is 3'-5' ssDNA/RNA exonuclease TatD from Erwinia tasmaniensis (strain DSM 17950 / CFBP 7177 / CIP 109463 / NCPPB 4357 / Et1/99).